Reading from the N-terminus, the 428-residue chain is Adenylosuccinate synthetase, chloroplastic (428 aa).

GTP is bound by residues 17–23 (GDEGKGK) and 45–47 (GHT). The Proton acceptor role is filled by D18. 2 residues coordinate Mg(2+): D18 and G45. Residues 18–21 (DEGK), 43–46 (NAGH), T135, R149, N226, T241, and R305 contribute to the IMP site. Catalysis depends on H46, which acts as the Proton donor. 301 to 307 (TTTGRPR) contacts substrate. GTP contacts are provided by residues R307, 333 to 335 (KLD), and 416 to 418 (GVG).

The protein belongs to the adenylosuccinate synthetase family. In terms of assembly, homodimer. The cofactor is Mg(2+).

It localises to the plastid. The protein resides in the chloroplast. It catalyses the reaction IMP + L-aspartate + GTP = N(6)-(1,2-dicarboxyethyl)-AMP + GDP + phosphate + 2 H(+). Its pathway is purine metabolism; AMP biosynthesis via de novo pathway; AMP from IMP: step 1/2. Its function is as follows. Plays an important role in the de novo pathway and in the salvage pathway of purine nucleotide biosynthesis. Catalyzes the first committed step in the biosynthesis of AMP from IMP. The polypeptide is Adenylosuccinate synthetase, chloroplastic (Ostreococcus lucimarinus (strain CCE9901)).